The primary structure comprises 88 residues: Small ribosomal subunit protein uS15 (88 aa).

This sequence belongs to the universal ribosomal protein uS15 family. As to quaternary structure, part of the 30S ribosomal subunit. Forms a bridge to the 50S subunit in the 70S ribosome, contacting the 23S rRNA.

Its function is as follows. One of the primary rRNA binding proteins, it binds directly to 16S rRNA where it helps nucleate assembly of the platform of the 30S subunit by binding and bridging several RNA helices of the 16S rRNA. In terms of biological role, forms an intersubunit bridge (bridge B4) with the 23S rRNA of the 50S subunit in the ribosome. This chain is Small ribosomal subunit protein uS15, found in Albidiferax ferrireducens (strain ATCC BAA-621 / DSM 15236 / T118) (Rhodoferax ferrireducens).